The following is a 364-amino-acid chain: Spermidine/putrescine import ATP-binding protein PotA (364 aa).

Positions 6–236 (IEIRQIYKSY…PANLHVAMFI (231 aa)) constitute an ABC transporter domain. 38–45 (GPSGCGKT) provides a ligand contact to ATP.

The protein belongs to the ABC transporter superfamily. Spermidine/putrescine importer (TC 3.A.1.11.1) family. As to quaternary structure, the complex is composed of two ATP-binding proteins (PotA), two transmembrane proteins (PotB and PotC) and a solute-binding protein (PotD).

The protein resides in the cell inner membrane. The enzyme catalyses ATP + H2O + polyamine-[polyamine-binding protein]Side 1 = ADP + phosphate + polyamineSide 2 + [polyamine-binding protein]Side 1.. In terms of biological role, part of the ABC transporter complex PotABCD involved in spermidine/putrescine import. Responsible for energy coupling to the transport system. The protein is Spermidine/putrescine import ATP-binding protein PotA of Legionella pneumophila (strain Lens).